Consider the following 137-residue polypeptide: NTF2-related export protein (137 aa).

One can recognise an NTF2 domain in the interval 19–135 (ESKKFMDVYY…YKVKSDRFRY (117 aa)).

As to quaternary structure, preferentially binds Ran-GTP.

The protein resides in the nucleus. Its function is as follows. Stimulator of protein export for NES-containing proteins. Also plays a role in the nuclear export of U1 snRNA, tRNA, and mRNA. This Caenorhabditis elegans protein is NTF2-related export protein (nxt-1).